A 1032-amino-acid polypeptide reads, in one-letter code: Probable LRR receptor-like serine/threonine-protein kinase At1g56130 (1032 aa).

An N-terminal signal peptide occupies residues 1 to 29; sequence MTRIRRSPCLLLLIIWFMCIAGSVQVVQS. Over 30 to 636 the chain is Extracellular; it reads QNQTGATTHP…PPSKGKNRTG (607 aa). N-linked (GlcNAc...) asparagine glycosylation is found at asparagine 31, asparagine 61, and asparagine 95. 10 LRR repeats span residues 101 to 122, 123 to 146, 148 to 170, 171 to 194, 196 to 217, 242 to 265, 290 to 314, 315 to 338, 340 to 360, and 361 to 385; these read ITNIKVYAIDVVGPIPPELWTL, TYLTNLNLGQNVLTGSLPPAIGNL, RMQWMTFGINALSGPVPKEIGLL, TDLRLLGISSNNFSGSIPDEIGRC, KLQQMYIDSSGLSGRIPLSFAN, WTKLTTLRIIGTGLSGPIPSSFSN, MKSLSVLVLRNNNLTGTIPSTIGEH, SSLRQVDLSFNKLHGPIPASLFNL, QLTHLFLGNNTLNGSFPTQKT, and QSLRNVDVSYNDLSGSLPSWVSLPS. N-linked (GlcNAc...) asparagine glycosylation occurs at asparagine 145. An N-linked (GlcNAc...) asparagine glycan is attached at asparagine 182. Asparagine 265, asparagine 302, asparagine 337, asparagine 348, and asparagine 352 each carry an N-linked (GlcNAc...) asparagine glycan. N-linked (GlcNAc...) asparagine glycosylation is found at asparagine 394, asparagine 580, and asparagine 633. The helical transmembrane segment at 637-657 threads the bilayer; sequence TIVGVIVGVGLLSILAGVVMF. The Cytoplasmic segment spans residues 658–1032; sequence TIRKRRKRYT…MLGSKINEGR (375 aa). The residue at position 683 (threonine 683) is a Phosphothreonine. The region spanning 694 to 968 is the Protein kinase domain; sequence FDPSNKLGEG…VAMLSGDVEI (275 aa). ATP-binding positions include 700-708 and lysine 722; that span reads LGEGGFGPV. Phosphotyrosine is present on tyrosine 767. Aspartate 818 functions as the Proton acceptor in the catalytic mechanism. Serine 822 and serine 851 each carry phosphoserine. A phosphothreonine mark is found at threonine 852 and threonine 857. Tyrosine 865 carries the phosphotyrosine modification. The interval 1008–1032 is disordered; sequence APGSEISPRDSDFKPMLGSKINEGR.

The protein belongs to the protein kinase superfamily. Ser/Thr protein kinase family.

It is found in the cell membrane. It catalyses the reaction L-seryl-[protein] + ATP = O-phospho-L-seryl-[protein] + ADP + H(+). The enzyme catalyses L-threonyl-[protein] + ATP = O-phospho-L-threonyl-[protein] + ADP + H(+). This chain is Probable LRR receptor-like serine/threonine-protein kinase At1g56130, found in Arabidopsis thaliana (Mouse-ear cress).